Consider the following 450-residue polypeptide: MSDFSEELKGPVTDDEEVETSVLSGAGMHFPWLQTYVETVAIGGKRRKDFAQTTSACLSFIQEALLKHQWQQAAEYMYSYFQTLEDSDSYKRQAAPEIIWKLGSEILFYHPKSNMESFNTFANRMKNIGVMNYLKISLQHALYLLHHGMLKDAKRNLSEAETWRHGENTSSREILINLIQAYKGLLQYYTWSEKKMELSKLDKDDYAYNAVAQDVFNHSWKTSANISALIKIPGVWDPFVKSYVEMLEFYGDRDGAQEVLTNYAYDEKFPSNPNAHIYLYNFLKRQKAPRSKLISVLKILYQIVPSHKLMLEFHTLLRKSEKEEHRKLGLEVLFGVLDFAGCTKNITAWKYLAKYLKNILMGNHLAWVQEEWNSRKNWWPGFHFSYFWAKSDWKEDTALACEKAFVAGLLLGKGCRYFRYILKQDHQILGKKIKRMKRSVKKYSIVNPRL.

In terms of assembly, component of the transcription factor SL1/TIF-IB complex, composed of TBP and at least TAF1A, TAF1B, TAF1C and TAF1D. In the complex interacts directly with TBP, TAF1A and TAF1B. Interaction of the SL1/TIF-IB subunits with TBP excludes interaction of TBP with the transcription factor IID (TFIID) subunits. Interacts with UBFT. Interacts with CEBPA (isoform 1 and isoform 4). Part of Pol I pre-initiation complex (PIC), in which Pol I core assembles with RRN3 and promoter-bound UTBF and SL1/TIF-IB complex.

It is found in the nucleus. Its subcellular location is the nucleolus. In terms of biological role, component of the transcription factor SL1/TIF-IB complex, which is involved in the assembly of the PIC (pre-initiation complex) during RNA polymerase I-dependent transcription. The rate of PIC formation probably is primarily dependent on the rate of association of SL1/TIF-IB with the rDNA promoter. SL1/TIF-IB is involved in stabilization of nucleolar transcription factor 1/UBTF on rDNA. Formation of SL1/TIF-IB excludes the association of TBP with TFIID subunits. The polypeptide is TATA box-binding protein-associated factor RNA polymerase I subunit A (TAF1A) (Homo sapiens (Human)).